A 337-amino-acid polypeptide reads, in one-letter code: Cathepsin L-like (337 aa).

An N-terminal signal peptide occupies residues 1-18 (MNRFILLALVAAVVAVNS). The propeptide at 19–119 (AKLSRQIESA…SSFLAPFNVQ (101 aa)) is activation peptide. N-linked (GlcNAc...) asparagine glycosylation occurs at Asn108. Intrachain disulfides connect Cys141–Cys184, Cys175–Cys217, and Cys276–Cys326. Cys144 is a catalytic residue. Residues His283 and Asn304 contribute to the active site.

It belongs to the peptidase C1 family. In terms of tissue distribution, expressed in intestine, pharynx posterior bulb, hypodermis and cuticle (at protein level). Expressed in germ cells, developing oocytes, sheath cells surrounding germ cells and oocytes, and in the eggshell (at protein level).

The protein resides in the secreted. The protein localises to the cytoplasmic granule. It is found in the lysosome. It localises to the endosome. Its subcellular location is the cytoplasmic vesicle. The protein resides in the phagosome. The enzyme catalyses Specificity close to that of papain. As compared to cathepsin B, cathepsin L exhibits higher activity toward protein substrates, but has little activity on Z-Arg-Arg-NHMec, and no peptidyl-dipeptidase activity.. In terms of biological role, cysteine protease which plays an essential role in the degradation of proteins in lysosomes. During early embryogenesis, maternally required for the proteolytic processing of yolk proteins in platelets, a lysosome-like structure where a slow and controlled degradation of yolk proteins occurs. In the gonad, required for the clearance of apoptotic germ cells in the engulfing cell phagolysosomes. In embryos, required for the degradation of endocytic and autophagic cargos. In embryos, may play a role in the degradation of lipid-containing droplets. Required for larval development. This Caenorhabditis elegans protein is Cathepsin L-like.